The following is a 495-amino-acid chain: Protein YhjJ (495 aa).

Residues Met-1–Ala-24 form the signal peptide.

This sequence belongs to the peptidase M16 family.

It is found in the periplasm. This is Protein YhjJ (yhjJ) from Salmonella typhi.